Reading from the N-terminus, the 111-residue chain is Sulditoxin subunit B (111 aa).

The first 19 residues, 1 to 19 (MKTLLLALAVVVLVCLGSA), serve as a signal peptide directing secretion. Positions 20–34 (NELGLGRQQIDRGRR) are excised as a propeptide. Gln35 bears the Pyrrolidone carboxylic acid mark. 5 disulfide bridges follow: Cys44–Cys68, Cys47–Cys55, Cys61–Cys87, Cys91–Cys102, and Cys103–Cys108.

It belongs to the three-finger toxin family. Ancestral subfamily. Boigatoxin sub-subfamily. In terms of assembly, heterodimer of sulditoxin subunits A and B; probably disulfide-linked. As to expression, expressed by the venom gland.

Its subcellular location is the secreted. In terms of biological role, reptile-specific neurotoxin (tested on geckos). Inhibits nicotinic acetylcholine receptor (nAChR). Not toxic to mammals (tested on mice). This is Sulditoxin subunit B from Spilotes sulphureus (Amazon puffing snake).